A 260-amino-acid polypeptide reads, in one-letter code: Adenosylcobinamide-GDP ribazoletransferase (260 aa).

7 helical membrane passes run 42 to 62 (PLAG…ANAI), 64 to 84 (LPPL…TGAL), 117 to 137 (FAAL…MAII), 144 to 164 (YALL…LAFW), 192 to 212 (GLGL…VALI), 214 to 234 (ALVL…AKIG), and 240 to 260 (TLGA…VMAL).

The protein belongs to the CobS family. The cofactor is Mg(2+).

The protein localises to the cell inner membrane. The catalysed reaction is alpha-ribazole + adenosylcob(III)inamide-GDP = adenosylcob(III)alamin + GMP + H(+). It catalyses the reaction alpha-ribazole 5'-phosphate + adenosylcob(III)inamide-GDP = adenosylcob(III)alamin 5'-phosphate + GMP + H(+). It participates in cofactor biosynthesis; adenosylcobalamin biosynthesis; adenosylcobalamin from cob(II)yrinate a,c-diamide: step 7/7. Its function is as follows. Joins adenosylcobinamide-GDP and alpha-ribazole to generate adenosylcobalamin (Ado-cobalamin). Also synthesizes adenosylcobalamin 5'-phosphate from adenosylcobinamide-GDP and alpha-ribazole 5'-phosphate. This is Adenosylcobinamide-GDP ribazoletransferase from Brucella melitensis biotype 1 (strain ATCC 23456 / CCUG 17765 / NCTC 10094 / 16M).